The following is a 114-amino-acid chain: uncharacterized protein (114 aa).

A helical transmembrane segment spans residues 13–30 (LYISAAGIASIYVVKTIV).

Its subcellular location is the mitochondrion outer membrane. This is an uncharacterized protein from Saccharomyces cerevisiae (strain ATCC 204508 / S288c) (Baker's yeast).